Reading from the N-terminus, the 1360-residue chain is DNA-directed RNA polymerase subunit beta (1360 aa).

It belongs to the RNA polymerase beta chain family. The RNAP catalytic core consists of 2 alpha, 1 beta, 1 beta' and 1 omega subunit. When a sigma factor is associated with the core the holoenzyme is formed, which can initiate transcription.

The enzyme catalyses RNA(n) + a ribonucleoside 5'-triphosphate = RNA(n+1) + diphosphate. In terms of biological role, DNA-dependent RNA polymerase catalyzes the transcription of DNA into RNA using the four ribonucleoside triphosphates as substrates. The polypeptide is DNA-directed RNA polymerase subunit beta (Magnetococcus marinus (strain ATCC BAA-1437 / JCM 17883 / MC-1)).